The following is a 762-amino-acid chain: Ribosome-releasing factor 2, mitochondrial (762 aa).

Residues M1–Y35 constitute a mitochondrion transit peptide. Residues S54–N341 form the tr-type G domain. GTP is bound by residues A63 to T70, D127 to H131, and N181 to D184.

Belongs to the TRAFAC class translation factor GTPase superfamily. Classic translation factor GTPase family. EF-G/EF-2 subfamily.

It localises to the mitochondrion. The catalysed reaction is GTP + H2O = GDP + phosphate + H(+). Mitochondrial GTPase that mediates the disassembly of ribosomes from messenger RNA at the termination of mitochondrial protein biosynthesis. Acts in collaboration with mrrf. GTP hydrolysis follows the ribosome disassembly and probably occurs on the ribosome large subunit. Not involved in the GTP-dependent ribosomal translocation step during translation elongation. The polypeptide is Ribosome-releasing factor 2, mitochondrial (gfm2) (Danio rerio (Zebrafish)).